The primary structure comprises 272 residues: Soluble interferon gamma receptor OPG193 (272 aa).

An N-terminal signal peptide occupies residues 1-13; sequence MRYIIILAVLFIN. Residues N42, N150, and N267 are each glycosylated (N-linked (GlcNAc...) asparagine; by host).

Belongs to the type II cytokine receptor family. Homodimer. Interacts with host IFNG.

It localises to the secreted. Its function is as follows. Counteracts the antiviral effects of host IFN-gamma. Acts as a soluble IFN-gamma receptor and thus inhibits the interaction between host IFN-gamma and its receptor. The protein is Soluble interferon gamma receptor OPG193 (OPG193) of Bos taurus (Bovine).